We begin with the raw amino-acid sequence, 182 residues long: Probable chorismate pyruvate-lyase (182 aa).

Positions 81, 119, and 171 each coordinate substrate.

It belongs to the UbiC family.

The protein resides in the cytoplasm. The catalysed reaction is chorismate = 4-hydroxybenzoate + pyruvate. Its pathway is cofactor biosynthesis; ubiquinone biosynthesis. In terms of biological role, removes the pyruvyl group from chorismate, with concomitant aromatization of the ring, to provide 4-hydroxybenzoate (4HB) for the ubiquinone pathway. The sequence is that of Probable chorismate pyruvate-lyase from Pseudomonas putida (Arthrobacter siderocapsulatus).